Here is a 441-residue protein sequence, read N- to C-terminus: Ribosomal protein uS12 methylthiotransferase RimO (441 aa).

One can recognise an MTTase N-terminal domain in the interval 8–118; it reads PKIGFVSLGC…VLEHVHHYVP (111 aa). C17, C53, C82, C150, C154, and C157 together coordinate [4Fe-4S] cluster. A Radical SAM core domain is found at 136-373; sequence LTPRHYAYLK…MQLQQQISAE (238 aa). In terms of domain architecture, TRAM spans 376 to 441; it reads QEKVGREILV…DEYDLWGSRV (66 aa).

It belongs to the methylthiotransferase family. RimO subfamily. [4Fe-4S] cluster serves as cofactor.

Its subcellular location is the cytoplasm. It carries out the reaction L-aspartate(89)-[ribosomal protein uS12]-hydrogen + (sulfur carrier)-SH + AH2 + 2 S-adenosyl-L-methionine = 3-methylsulfanyl-L-aspartate(89)-[ribosomal protein uS12]-hydrogen + (sulfur carrier)-H + 5'-deoxyadenosine + L-methionine + A + S-adenosyl-L-homocysteine + 2 H(+). Catalyzes the methylthiolation of an aspartic acid residue of ribosomal protein uS12. This chain is Ribosomal protein uS12 methylthiotransferase RimO, found in Citrobacter koseri (strain ATCC BAA-895 / CDC 4225-83 / SGSC4696).